A 96-amino-acid chain; its full sequence is UPF0235 protein Spro_4033 (96 aa).

The protein belongs to the UPF0235 family.

The polypeptide is UPF0235 protein Spro_4033 (Serratia proteamaculans (strain 568)).